We begin with the raw amino-acid sequence, 357 residues long: tRNA N6-adenosine threonylcarbamoyltransferase (357 aa).

The Fe cation site is built by His-115 and His-119. Substrate contacts are provided by residues 137-141 (LASGG), Asp-170, Gly-183, and Asn-281. Asp-309 is a Fe cation binding site.

The protein belongs to the KAE1 / TsaD family. Fe(2+) serves as cofactor.

The protein localises to the cytoplasm. It catalyses the reaction L-threonylcarbamoyladenylate + adenosine(37) in tRNA = N(6)-L-threonylcarbamoyladenosine(37) in tRNA + AMP + H(+). In terms of biological role, required for the formation of a threonylcarbamoyl group on adenosine at position 37 (t(6)A37) in tRNAs that read codons beginning with adenine. Is involved in the transfer of the threonylcarbamoyl moiety of threonylcarbamoyl-AMP (TC-AMP) to the N6 group of A37, together with TsaE and TsaB. TsaD likely plays a direct catalytic role in this reaction. In Bradyrhizobium diazoefficiens (strain JCM 10833 / BCRC 13528 / IAM 13628 / NBRC 14792 / USDA 110), this protein is tRNA N6-adenosine threonylcarbamoyltransferase.